A 384-amino-acid polypeptide reads, in one-letter code: Cytochrome b (384 aa).

Helical transmembrane passes span 32–52 (FGFL…FLAI), 76–98 (WLLR…IHIS), 113–133 (TWVV…MGYV), and 179–199 (FFSF…VHMA). 2 residues coordinate heme b: H82 and H96. H183 and H197 together coordinate heme b. H202 is an a ubiquinone binding site. 4 helical membrane-spanning segments follow: residues 225–245 (FIIK…LFVY), 289–309 (LGGV…PWIT), 321–341 (LYKK…WIGG), and 348–368 (YVVI…IFIP).

The protein belongs to the cytochrome b family. In terms of assembly, the main subunits of complex b-c1 are: cytochrome b, cytochrome c1 and the Rieske protein. Heme b serves as cofactor.

Its subcellular location is the mitochondrion inner membrane. Functionally, component of the ubiquinol-cytochrome c reductase complex (complex III or cytochrome b-c1 complex) that is part of the mitochondrial respiratory chain. The b-c1 complex mediates electron transfer from ubiquinol to cytochrome c. Contributes to the generation of a proton gradient across the mitochondrial membrane that is then used for ATP synthesis. The polypeptide is Cytochrome b (MT-CYB) (Cyanidium caldarium (Red alga)).